The chain runs to 283 residues: Formamidopyrimidine-DNA glycosylase (283 aa).

Proline 2 functions as the Schiff-base intermediate with DNA in the catalytic mechanism. Glutamate 3 acts as the Proton donor in catalysis. The Proton donor; for beta-elimination activity role is filled by lysine 58. Residues histidine 100, arginine 119, and arginine 162 each coordinate DNA. An FPG-type zinc finger spans residues 247 to 283 (RVYGREGQPCVTPGCRGLVGRIVQSGRSSFHCPECQR). Arginine 273 serves as the catalytic Proton donor; for delta-elimination activity.

It belongs to the FPG family. As to quaternary structure, monomer. The cofactor is Zn(2+).

It carries out the reaction Hydrolysis of DNA containing ring-opened 7-methylguanine residues, releasing 2,6-diamino-4-hydroxy-5-(N-methyl)formamidopyrimidine.. The enzyme catalyses 2'-deoxyribonucleotide-(2'-deoxyribose 5'-phosphate)-2'-deoxyribonucleotide-DNA = a 3'-end 2'-deoxyribonucleotide-(2,3-dehydro-2,3-deoxyribose 5'-phosphate)-DNA + a 5'-end 5'-phospho-2'-deoxyribonucleoside-DNA + H(+). Its function is as follows. Involved in base excision repair of DNA damaged by oxidation or by mutagenic agents. Acts as a DNA glycosylase that recognizes and removes damaged bases. Has a preference for oxidized purines, such as 7,8-dihydro-8-oxoguanine (8-oxoG). Has AP (apurinic/apyrimidinic) lyase activity and introduces nicks in the DNA strand. Cleaves the DNA backbone by beta-delta elimination to generate a single-strand break at the site of the removed base with both 3'- and 5'-phosphates. This Cereibacter sphaeroides (strain ATCC 17025 / ATH 2.4.3) (Rhodobacter sphaeroides) protein is Formamidopyrimidine-DNA glycosylase.